The following is a 551-amino-acid chain: Interleukin-2 receptor subunit beta (551 aa).

An N-terminal signal peptide occupies residues 1-26; that stretch reads MATLALSWCLPLLILLLPLATSSASA. The Extracellular segment spans residues 27-240; it reads AVNGTSRFTC…TKPAALGKDT (214 aa). Asn29, Asn43, and Asn71 each carry an N-linked (GlcNAc...) asparagine glycan. Cys36 and Cys46 are oxidised to a cystine. The cysteines at positions 74 and 86 are disulfide-linked. The Fibronectin type-III domain maps to 134 to 234; the sequence is APISLQVVHV…QPLAFRTKPA (101 aa). Asn149 carries an N-linked (GlcNAc...) asparagine glycan. Residues 220 to 224 carry the WSXWS motif motif; that stretch reads WSPWS. Residues 241–265 form a helical membrane-spanning segment; sequence IPWLGHLLVGLSGAFGFIILVYLLI. Over 266–551 the chain is Cytoplasmic; that stretch reads NCRNTGPWLK…LQDQDPTHLV (286 aa). Residues 278 to 286 carry the Box 1 motif motif; that stretch reads LKCHTPDPS. Disordered stretches follow at residues 389–417, 430–484, and 496–517; these read EEEP…EDDA, FSPS…DLVD, and AGEQ…ARPP.

The protein belongs to the type I cytokine receptor family. Type 4 subfamily. Non-covalent dimer of an alpha and a beta subunit. IL2R exists in 3 different forms: a high affinity dimer, an intermediate affinity monomer (beta subunit), and a low affinity monomer (alpha subunit). The high and intermediate affinity forms also associate with a gamma subunit. Interacts with SHB upon interleukin stimulation.

It localises to the cell membrane. It is found in the cell surface. In terms of biological role, receptor for interleukin-2. This beta subunit is involved in receptor mediated endocytosis and transduces the mitogenic signals of IL2. Probably in association with IL15RA, involved in the stimulation of neutrophil phagocytosis by IL15. This is Interleukin-2 receptor subunit beta (IL2RB) from Macaca fascicularis (Crab-eating macaque).